The sequence spans 258 residues: Type III pantothenate kinase (258 aa).

6 to 13 (DVGNSDTV) provides a ligand contact to ATP. Residue 108–111 (GSDR) participates in substrate binding. The active-site Proton acceptor is Asp110. Asp130 serves as a coordination point for K(+). An ATP-binding site is contributed by Thr133. Thr185 contributes to the substrate binding site.

It belongs to the type III pantothenate kinase family. Homodimer. It depends on NH4(+) as a cofactor. K(+) serves as cofactor.

The protein resides in the cytoplasm. It carries out the reaction (R)-pantothenate + ATP = (R)-4'-phosphopantothenate + ADP + H(+). It functions in the pathway cofactor biosynthesis; coenzyme A biosynthesis; CoA from (R)-pantothenate: step 1/5. Its function is as follows. Catalyzes the phosphorylation of pantothenate (Pan), the first step in CoA biosynthesis. This chain is Type III pantothenate kinase, found in Thermobifida fusca (strain YX).